The primary structure comprises 686 residues: MHSDSDDYFSGDDDDFDRQQEIARSAFADMCHDWERNQKYDRALQLTIERLHCEGKEAHVLDIGTGSGLLSMMAVRAGADSVTACEAFRPMADCAERVIASNGMGDRIRLVKKKSTELKVGAGKDMERKANVLVTELFDTELIGEGAIATYRHALQFLLEEGCRVIPDKATVFAQVVECPLAMSWQTPKLLCSSDGDVLLRVPEEMVNCRGSSAVFDVQLSQLPLESFNALSEPIPVFEFDWSSREALKFKRHSRNLLKVQSSGIPQAVFMWWDLKMDLEGTVLLSCAPFWAHPDFEGLKTQKQNDSIPEPNLIPWRDHWMQAIYFLPHSKTPLAKGEEIALDAFHDEFSWWFGLNDLSLDPGHCSCGMHIAYSRSRIGQLNDGPRNKRILNYLEEVLDKNSVVLVLGDGSLLGLSIRAMGAKKVILVETNQTSRHCMERFVEHNGLENVEILSCLDDLTPDATADITHIFGEPFFTSAILPWENAIQFIWELNRVKALLNHEVSVIPHSFSIYGVAVEFLDLQKISAPLGTCEGFDLSLMDRMIEEHSKVADSPVEAQPLWEYPCLPLGPKCKMITINVAEGSQNQLEQGKITLTRHHEIKECNGIALWAEWHMGKNVSPKNTISSGPLSVIDEASELPVRPLQWNSNWRQGVHLLRKPLEESKMFLSWTVKYNAQLKTCYFKFD.

SAM-dependent MTase PRMT-type domains follow at residues 5–352 (SDDY…FSWW) and 357–686 (DLSL…FKFD).

The protein belongs to the class I-like SAM-binding methyltransferase superfamily. Protein arginine N-methyltransferase family. PRMT7 subfamily.

Its function is as follows. Essential arginine methyltransferase that can both catalyze the formation of omega-N monomethylarginine (MMA) and symmetrical dimethylarginine (sDMA). Specifically mediates the symmetrical dimethylation of arginine residues in the small nuclear ribonucleoproteins SmD1 and SmD3. The protein is Protein arginine N-methyltransferase 7 (Art7) of Aedes aegypti (Yellowfever mosquito).